The chain runs to 352 residues: Isoflavone-7-O-methyltransferase 6 (352 aa).

A substrate-binding site is contributed by 118 to 127; sequence VLDPTLSGSY. The S-adenosyl-L-methionine site is built by G196, D219, D239, M240, and K253. H257 serves as the catalytic Proton acceptor.

This sequence belongs to the class I-like SAM-binding methyltransferase superfamily. Cation-independent O-methyltransferase family. COMT subfamily. In terms of assembly, homodimer.

The catalysed reaction is a 7-hydroxyisoflavone + S-adenosyl-L-methionine = a 7-methoxyisoflavone + S-adenosyl-L-homocysteine + H(+). Its pathway is phytoalexin biosynthesis; medicarpin biosynthesis. Transfers a methyl group to 7-hydroxyls of the isoflavones daidzein, genistein and 6,7,4'-trihydroxyisoflavone. Can also methylate (+)6a-hydroxymaackiain with lower efficiency. The sequence is that of Isoflavone-7-O-methyltransferase 6 from Medicago sativa (Alfalfa).